We begin with the raw amino-acid sequence, 114 residues long: Hydrogenase maturation factor HypA (114 aa).

Ni(2+) is bound at residue His-2. Cys-73, Cys-76, Cys-90, and Cys-93 together coordinate Zn(2+).

Belongs to the HypA/HybF family.

Its function is as follows. Involved in the maturation of [NiFe] hydrogenases. Required for nickel insertion into the metal center of the hydrogenase. This chain is Hydrogenase maturation factor HypA, found in Klebsiella pneumoniae subsp. pneumoniae (strain ATCC 700721 / MGH 78578).